The primary structure comprises 142 residues: Ribosome maturation factor RimP (142 aa).

Belongs to the RimP family.

The protein localises to the cytoplasm. Its function is as follows. Required for maturation of 30S ribosomal subunits. This is Ribosome maturation factor RimP from Nitratiruptor sp. (strain SB155-2).